We begin with the raw amino-acid sequence, 591 residues long: Polyphenol oxidase D, chloroplastic (591 aa).

The transit peptide at 1–83 (MASLCSNSST…ANAIPLAASA (83 aa)) directs the protein to the chloroplast. Intrachain disulfides connect Cys-94–Cys-110 and Cys-109–Cys-177. Positions 176, 194, 203, 324, 328, and 366 each coordinate Cu cation. Residues 180-194 (CNGAYRIGGKELQVH) constitute a cross-link (2'-(S-cysteinyl)-histidine (Cys-His)).

The protein belongs to the tyrosinase family. The cofactor is Cu(2+).

The protein resides in the plastid. Its subcellular location is the chloroplast thylakoid lumen. It carries out the reaction 2 catechol + O2 = 2 1,2-benzoquinone + 2 H2O. In terms of biological role, catalyzes the oxidation of mono- and o-diphenols to o-diquinones. In Solanum lycopersicum (Tomato), this protein is Polyphenol oxidase D, chloroplastic.